A 213-amino-acid polypeptide reads, in one-letter code: High frequency lysogenization protein HflD homolog (213 aa).

Residues 79–126 adopt a coiled-coil conformation; it reads QGLNAELTRYTLSLMVLERKLSSAKGALDTLGNRINGLQRQLEHFDLQ.

Belongs to the HflD family.

It is found in the cytoplasm. It localises to the cell inner membrane. The protein is High frequency lysogenization protein HflD homolog of Shigella dysenteriae serotype 1 (strain Sd197).